Consider the following 453-residue polypeptide: Allantoinase (453 aa).

Zn(2+) is bound by residues His-59, His-61, Lys-146, His-186, His-242, and Asp-315. Lys-146 bears the N6-carboxylysine mark.

Belongs to the metallo-dependent hydrolases superfamily. Allantoinase family. As to quaternary structure, homotetramer. It depends on Zn(2+) as a cofactor. In terms of processing, carboxylation allows a single lysine to coordinate two zinc ions.

It carries out the reaction (S)-allantoin + H2O = allantoate + H(+). It functions in the pathway nitrogen metabolism; (S)-allantoin degradation; allantoate from (S)-allantoin: step 1/1. Functionally, catalyzes the conversion of allantoin (5-ureidohydantoin) to allantoic acid by hydrolytic cleavage of the five-member hydantoin ring. This is Allantoinase from Escherichia coli O9:H4 (strain HS).